Consider the following 116-residue polypeptide: MSVKKETRLRRARKTRLKMRELEVVRLCVHRSSQHIYAQVITADGGKVLASASTLDKELRGAATGNVEAAKKVGLLVAERAKAAGVTQVAFDRSGFKYHGRVKALADAAREGGLEF.

The protein belongs to the universal ribosomal protein uL18 family. As to quaternary structure, part of the 50S ribosomal subunit; part of the 5S rRNA/L5/L18/L25 subcomplex. Contacts the 5S and 23S rRNAs.

Its function is as follows. This is one of the proteins that bind and probably mediate the attachment of the 5S RNA into the large ribosomal subunit, where it forms part of the central protuberance. This Azotobacter vinelandii (strain DJ / ATCC BAA-1303) protein is Large ribosomal subunit protein uL18.